Consider the following 935-residue polypeptide: MAIIYNPNKKIFTLHTAHTTYQMQVDPLGYLLHLYYGEKTNSSMDYVLTYADRGFSGNPYAAGMDRTYSLDALPQEYPSLGTGDYRNIALNIKNEKGVESADLLFKSYEIRNGKYRLQGLPAVWADEKEAQTLEIVLADENAQVEVHLLYGVLEENDVITRSVRIKNTGTGQITIEKAAAACLDFVQGEFDVLRFYGKHAMERNLERTPLGHGTIAFGSRRGTSSHQYNPAVILAEKGTTETAGSCYGMLFVYSGNFSCEAEKDQFNQTRLLLGLNEELFSYPLASGETFTVPEVILSYSAEGLSALSQQYHNCIRNHVCRSKYVHMQRPVLINSWEAAYFDFTGDTIVDLAKEAASLGIDMVVMDDGWFGKRNDDNSSLGDWQVNETKLGGSLAELITRVHEQGMKFGIWIEPEMINEDSDLYRAHPDWAIRIQGKKPVRSRNQLLLDFSRKEVRDCVFDQICVVLDQGKIDYVKWDMNRSMADVYAGNLSYDYVLGVYDFMERLCSRYPDLLLEGCSGGGGRFDAGMLYYSPQIWCSDNTDAINRTRIQYGTSFFYPVSAMGAHVSAVPNHQTGRVTSFHTRGVTAMAGTFGYELNPALLSDEEKQQIREQIKTYKKYETLINEGTYWRLSDPFTDEIAAWMSVSEEQDHALVSVVRLMAEANQATVYVRLRGLKPDAVYLEEQSGRQYSGAALMHAGIPLPPFTEEYEAYQFAFTELKEAGRLYEKVQKWCDGNAENRVVISIYGGSGSGKTTLATALQQYFLNDGTECYLLSGDDYPHRIPKRNDEERMRVYKEAGEDGLRGYLGTKKEIDFDRINEVLAAFHEGKDSITLRHMGREDGEISLEETDFSGISVLLLEWTHGGSDDLHGVDLPVFLESSPGETRERRIRRNRDENAASPFICRVVELEQEKLEVQRKNAGLIVGKDGSVYEQ.

The alpha-galactosidase stretch occupies residues 1-720 (MAIIYNPNKK…EAYQFAFTEL (720 aa)). Mg(2+) is bound by residues Glu-176, Glu-277, and Phe-280. Substrate is bound by residues 366–367 (DD), Arg-443, 476–480 (KWDMN), and 518–521 (CSGG). The active-site Nucleophile is the Asp-526. Asp-540 is a binding site for substrate. Glu-606 (proton donor/acceptor) is an active-site residue. The interval 721 to 935 (KEAGRLYEKV…VGKDGSVYEQ (215 aa)) is sucrose kinase. ATP is bound by residues 748 to 752 (GGSGS) and Ala-824.

In the N-terminal section; belongs to the glycosyl hydrolase 36 family. This sequence in the C-terminal section; belongs to the uridine kinase family. In terms of assembly, homotetramer. Requires Mg(2+) as cofactor.

The enzyme catalyses Hydrolysis of terminal, non-reducing alpha-D-galactose residues in alpha-D-galactosides, including galactose oligosaccharides, galactomannans and galactolipids.. Bifunctional enzyme with alpha-galactosidase and sucrose kinase activities. Produces sucrose-6-phosphate directly from raffinose. Binds ATP. Phosphorylates sucrose specifically on the C6 position of glucose in the presence of ATP. Hydrolyzes melibiose, raffinose, stachyose and synthetic substrate p-nitrophenyl-alpha-D-galactopyranoside with high activity. Low activity against locust bean gum, guar gum and synthetic substrates xylose alpha-D-4-nitrophenol, glucose alpha-D-4-nitrophenol and o-nitrophenyl-alpha-D-galactopyranoside. This chain is Bifunctional alpha-galactosidase/sucrose kinase AgaSK, found in Mediterraneibacter gnavus (Ruminococcus gnavus).